Reading from the N-terminus, the 285-residue chain is Diaminopimelate epimerase (285 aa).

Residues Asn-14 and Asn-67 each coordinate substrate. Residue Cys-76 is the Proton donor of the active site. Substrate contacts are provided by residues 77–78, Asn-166, Asn-199, and 217–218; these read GN and ER. The active-site Proton acceptor is the Cys-226. 227–228 serves as a coordination point for substrate; it reads GT.

Belongs to the diaminopimelate epimerase family. As to quaternary structure, homodimer.

The protein resides in the cytoplasm. The enzyme catalyses (2S,6S)-2,6-diaminopimelate = meso-2,6-diaminopimelate. It functions in the pathway amino-acid biosynthesis; L-lysine biosynthesis via DAP pathway; DL-2,6-diaminopimelate from LL-2,6-diaminopimelate: step 1/1. Catalyzes the stereoinversion of LL-2,6-diaminopimelate (L,L-DAP) to meso-diaminopimelate (meso-DAP), a precursor of L-lysine and an essential component of the bacterial peptidoglycan. In Bacillus licheniformis (strain ATCC 14580 / DSM 13 / JCM 2505 / CCUG 7422 / NBRC 12200 / NCIMB 9375 / NCTC 10341 / NRRL NRS-1264 / Gibson 46), this protein is Diaminopimelate epimerase.